A 488-amino-acid chain; its full sequence is uncharacterized protein (488 aa).

It is found in the cytoplasm. The protein resides in the nucleus. This is an uncharacterized protein from Schizosaccharomyces pombe (strain 972 / ATCC 24843) (Fission yeast).